Reading from the N-terminus, the 275-residue chain is Undecaprenyl-diphosphatase (275 aa).

8 consecutive transmembrane segments (helical) span residues 1-21, 42-62, 80-100, 107-127, 147-167, 184-204, 214-234, and 249-269; these read MDWV…FLPI, VKDA…LVYY, TLWT…LAFG, LFKP…MWLI, SLLI…SRSA, TKFS…LNLV, IGLL…YLAI, and FAVY…TGVM.

The protein belongs to the UppP family.

Its subcellular location is the cell membrane. The catalysed reaction is di-trans,octa-cis-undecaprenyl diphosphate + H2O = di-trans,octa-cis-undecaprenyl phosphate + phosphate + H(+). In terms of biological role, catalyzes the dephosphorylation of undecaprenyl diphosphate (UPP). Confers resistance to bacitracin. This chain is Undecaprenyl-diphosphatase, found in Deinococcus deserti (strain DSM 17065 / CIP 109153 / LMG 22923 / VCD115).